A 142-amino-acid chain; its full sequence is Large ribosomal subunit protein uL11 (142 aa).

This sequence belongs to the universal ribosomal protein uL11 family. Part of the ribosomal stalk of the 50S ribosomal subunit. Interacts with L10 and the large rRNA to form the base of the stalk. L10 forms an elongated spine to which L12 dimers bind in a sequential fashion forming a multimeric L10(L12)X complex. Post-translationally, one or more lysine residues are methylated.

In terms of biological role, forms part of the ribosomal stalk which helps the ribosome interact with GTP-bound translation factors. The protein is Large ribosomal subunit protein uL11 of Brucella anthropi (strain ATCC 49188 / DSM 6882 / CCUG 24695 / JCM 21032 / LMG 3331 / NBRC 15819 / NCTC 12168 / Alc 37) (Ochrobactrum anthropi).